The primary structure comprises 279 residues: Energy-coupling factor transporter ATP-binding protein EcfA1 (279 aa).

The ABC transporter domain occupies Val-6–Gly-240. Residue Gly-40–Ser-47 participates in ATP binding.

The protein belongs to the ABC transporter superfamily. Energy-coupling factor EcfA family. In terms of assembly, forms a stable energy-coupling factor (ECF) transporter complex composed of 2 membrane-embedded substrate-binding proteins (S component), 2 ATP-binding proteins (A component) and 2 transmembrane proteins (T component).

It localises to the cell membrane. Its function is as follows. ATP-binding (A) component of a common energy-coupling factor (ECF) ABC-transporter complex. Unlike classic ABC transporters this ECF transporter provides the energy necessary to transport a number of different substrates. The chain is Energy-coupling factor transporter ATP-binding protein EcfA1 from Listeria innocua serovar 6a (strain ATCC BAA-680 / CLIP 11262).